Consider the following 922-residue polypeptide: MDYRNTLNLPETDFPMRGNLPQREPEILQKWEEEDIYATVQKARAGRPKFVLHDGPPYANGDIHLGHALNKVIKDIIVKYKTMAGFDAPYVPGWDTHGLPIEQQVIKKLGVNRHAVSVVEFRRMCKEYAKKYISIQKEQFKRLGVRGDWKNPYLTLEKEYEAAQIGVFGKMARKKYIYKGLKPVYWCPSCETALAEAEIEYAEKTSHAIYVKFPVKEGKGVLTDENTFVIIWTTTPWTLPANLAITLHEEFSYVQVQVEKEHWLVAEGMLESLRSLWNLELPVEKRFVGKELEGVICKHPFIERDSVLILGEHVTLEAGTGCVHTAPGHGEEDFNVGKKYGLPVLCPVDHQGKFTAEGGAYAGMKVDKANPVIIEDLKNLHALVHEDKIKHSYAHCWRCNNPIIYRATEQWFASIDGFRKAALEEIDKVQWIPSWGKDRIYNMIADRGDWCISRQRTWGVPIPIFYCEDCGKEIISDETIAKVQEIFREEGSDAWFLRPAAELLPEGFTCACGGKSFRKETDIMDVWFDSGTSHTSVLMERKELAWPADLYMEGSDQHRGWFNSSLSTSVAAYGKAPYKAVLTHGFLVDEKGRKMSKSLGNGVDPLQVTKEMGADILRLWVCAADYKNDVAVSPRIMKQMSEAYRKIRNTLRFLLSNLNDFDPAKDRVAYKDLPEIDRWALLQLGKVTQRVLQGYEKYEFHWVYHSVHNFCAVELSAIYLDIVKDRLYVEGKNSTLRRASQTVLYDVLNALVRLMAPVLTYTADEIWPYVPGVPAGSHVQTEEMPEALPQWLDEALEKKWDTLLAVRSEVTKALEKARQDKLINHPLTAQVDLYPNAELEGFLRGIPNLSEIFIVSAVQLHSAGEEKPEGLSMAEDLAGFGIAVNSAAGEKCERCWIYDTGVGENQEHPTLCPRCASVVSHL.

Positions 57–67 match the 'HIGH' region motif; the sequence is PYANGDIHLGH. L-isoleucyl-5'-AMP is bound at residue Glu-553. The short motif at 594–598 is the 'KMSKS' region element; sequence KMSKS. Lys-597 is a binding site for ATP. Zn(2+)-binding residues include Cys-892, Cys-895, Cys-912, and Cys-915.

The protein belongs to the class-I aminoacyl-tRNA synthetase family. IleS type 1 subfamily. As to quaternary structure, monomer. Zn(2+) serves as cofactor.

It is found in the cytoplasm. The catalysed reaction is tRNA(Ile) + L-isoleucine + ATP = L-isoleucyl-tRNA(Ile) + AMP + diphosphate. In terms of biological role, catalyzes the attachment of isoleucine to tRNA(Ile). As IleRS can inadvertently accommodate and process structurally similar amino acids such as valine, to avoid such errors it has two additional distinct tRNA(Ile)-dependent editing activities. One activity is designated as 'pretransfer' editing and involves the hydrolysis of activated Val-AMP. The other activity is designated 'posttransfer' editing and involves deacylation of mischarged Val-tRNA(Ile). In Desulfitobacterium hafniense (strain Y51), this protein is Isoleucine--tRNA ligase.